The chain runs to 96 residues: Integration host factor subunit beta (96 aa).

This sequence belongs to the bacterial histone-like protein family. As to quaternary structure, heterodimer of an alpha and a beta chain.

This protein is one of the two subunits of integration host factor, a specific DNA-binding protein that functions in genetic recombination as well as in transcriptional and translational control. This Caulobacter vibrioides (strain ATCC 19089 / CIP 103742 / CB 15) (Caulobacter crescentus) protein is Integration host factor subunit beta.